The chain runs to 156 residues: CRIB domain-containing protein RIC10 (156 aa).

A CRIB domain is found at 30–43 (IGFPTDVKHVAHIG). The segment covering 68-77 (RPSSFSNARP) has biased composition (polar residues). Residues 68–156 (RPSSFSNARP…SYKSTVSRLI (89 aa)) form a disordered region. Residues 78–96 (STSFFTSSSSTDFDQGSSQ) are compositionally biased toward low complexity. Positions 117 to 128 (NNKKKSSRRKKS) are enriched in basic residues. A compositionally biased stretch (low complexity) spans 129–156 (SSSSSSPKSSRSSVLSKSSYKSTVSRLI).

In terms of tissue distribution, expressed in roots, leaves, flowers and pollen.

It is found in the cytoplasm. In terms of biological role, functions as a downstream effector of Rho-related GTP binding proteins of the 'Rho of Plants' (ROPs) family. Participates in the propagation of ROP GTPase signals in specific cellular responses. Is involved in pollen tube growth regulation. This is CRIB domain-containing protein RIC10 (RIC10) from Arabidopsis thaliana (Mouse-ear cress).